A 29-amino-acid chain; its full sequence is Myosin heavy chain, muscle (29 aa).

The segment covering 1–16 (SKYESEGVARSEELQE) has biased composition (basic and acidic residues). Residues 1–29 (SKYESEGVARSEELQEVHQAFADAGRKPI) are disordered.

In terms of assembly, muscle myosin is a hexameric protein that consists of 2 heavy chain subunits (MHC), 2 alkali light chain subunits (MLC) and 2 regulatory light chain subunits (MLC-2).

It is found in the cytoplasm. The protein localises to the myofibril. Muscle contraction. The sequence is that of Myosin heavy chain, muscle from Bombyx mori (Silk moth).